The chain runs to 436 residues: tRNA(Ile)-lysidine synthase (436 aa).

Residue 27–32 participates in ATP binding; sequence SGGVDS.

The protein belongs to the tRNA(Ile)-lysidine synthase family.

It is found in the cytoplasm. It catalyses the reaction cytidine(34) in tRNA(Ile2) + L-lysine + ATP = lysidine(34) in tRNA(Ile2) + AMP + diphosphate + H(+). Its function is as follows. Ligates lysine onto the cytidine present at position 34 of the AUA codon-specific tRNA(Ile) that contains the anticodon CAU, in an ATP-dependent manner. Cytidine is converted to lysidine, thus changing the amino acid specificity of the tRNA from methionine to isoleucine. This is tRNA(Ile)-lysidine synthase from Vibrio vulnificus (strain CMCP6).